We begin with the raw amino-acid sequence, 182 residues long: MSDNFALHGTTILCLKKKEEIIIAADGQVSHGNTVLKSTARKLRTIANNKIIVGFAGSTADGLALFEKLEIKIEQYNSNLLRSAVELAKDWRNDKYLRRLEAMMIVADRSHILILTGNGDVIEPENNVAAIGSGGLFALSAARALMSYENNLTAEEIALKSMNIAADLCVFSNHNIIMEKVV.

Residue threonine 10 is part of the active site. Residues alanine 166, cysteine 169, and serine 172 each coordinate Na(+).

This sequence belongs to the peptidase T1B family. HslV subfamily. In terms of assembly, a double ring-shaped homohexamer of HslV is capped on each side by a ring-shaped HslU homohexamer. The assembly of the HslU/HslV complex is dependent on binding of ATP.

Its subcellular location is the cytoplasm. The catalysed reaction is ATP-dependent cleavage of peptide bonds with broad specificity.. With respect to regulation, allosterically activated by HslU binding. In terms of biological role, protease subunit of a proteasome-like degradation complex believed to be a general protein degrading machinery. The polypeptide is ATP-dependent protease subunit HslV (Rickettsia prowazekii (strain Madrid E)).